The following is a 194-amino-acid chain: Outer-membrane lipoprotein LolB (194 aa).

An N-terminal signal peptide occupies residues 1 to 18 (MTLFLRIFTFGCLLLLAG). Residue Cys19 is the site of N-palmitoyl cysteine attachment. Cys19 carries the S-diacylglycerol cysteine lipid modification.

It belongs to the LolB family. Monomer.

It localises to the cell outer membrane. Functionally, plays a critical role in the incorporation of lipoproteins in the outer membrane after they are released by the LolA protein. The polypeptide is Outer-membrane lipoprotein LolB (Aeromonas salmonicida (strain A449)).